A 321-amino-acid polypeptide reads, in one-letter code: Beta-ketoacyl-[acyl-carrier-protein] synthase III (321 aa).

Catalysis depends on residues cysteine 114 and histidine 248. Positions 249–253 (QANKR) are ACP-binding. The active site involves asparagine 278.

This sequence belongs to the thiolase-like superfamily. FabH family. In terms of assembly, homodimer.

Its subcellular location is the cytoplasm. The catalysed reaction is malonyl-[ACP] + acetyl-CoA + H(+) = 3-oxobutanoyl-[ACP] + CO2 + CoA. It participates in lipid metabolism; fatty acid biosynthesis. Its function is as follows. Catalyzes the condensation reaction of fatty acid synthesis by the addition to an acyl acceptor of two carbons from malonyl-ACP. Catalyzes the first condensation reaction which initiates fatty acid synthesis and may therefore play a role in governing the total rate of fatty acid production. Possesses both acetoacetyl-ACP synthase and acetyl transacylase activities. Its substrate specificity determines the biosynthesis of branched-chain and/or straight-chain of fatty acids. This is Beta-ketoacyl-[acyl-carrier-protein] synthase III from Sphingopyxis alaskensis (strain DSM 13593 / LMG 18877 / RB2256) (Sphingomonas alaskensis).